The primary structure comprises 158 residues: MQVMTSRFGTLEINPSDLLHFPQGIPAFEHLKEFFFYPIPENPAFTWLQAAADPEVAFLLVDPFLFFPGYAVDLPARLQEELAIKDPADALVYAVVTIPDGDIRRATANLVGPIIINPTVRLGMQLILEGTKYTTRHQLFKESFSDDESIPSSGGNEG.

The protein belongs to the FliW family. Interacts with translational regulator CsrA and flagellin(s).

The protein localises to the cytoplasm. Acts as an anti-CsrA protein, binds CsrA and prevents it from repressing translation of its target genes, one of which is flagellin. Binds to flagellin and participates in the assembly of the flagellum. The sequence is that of Flagellar assembly factor FliW from Moorella thermoacetica (strain ATCC 39073 / JCM 9320).